Here is a 159-residue protein sequence, read N- to C-terminus: Peripheral myelin protein 22 (159 aa).

A topological domain (cytoplasmic) is located at residue methionine 1. The helical transmembrane segment at 2 to 31 (LLLLLGIIVLHVAVLVLLFVATIVSQWIVG) threads the bilayer. At 32–64 (NGHATDLWQNCSTTSGNVQHCLSSSANEWLQSV) the chain is on the extracellular side. An N-linked (GlcNAc...) asparagine glycan is attached at asparagine 41. Residues 65–91 (QATMILSIIFSVLSLFLFFCQLFTLTK) form a helical membrane-spanning segment. Over 92 to 95 (GGRF) the chain is Cytoplasmic. Residues 96-119 (YITGIFQILAGLCVMSAASIYTVR) traverse the membrane as a helical segment. Topologically, residues 120–133 (HPEWHLDSAYSYGF) are extracellular. The helical transmembrane segment at 134-156 (AYILAWVAFPLALLSGVVYVILR) threads the bilayer. Topologically, residues 157-159 (KRE) are cytoplasmic.

Belongs to the PMP-22/EMP/MP20 family. Ubiquitinated by the DCX(DCAF13) E3 ubiquitin ligase complex, leading to its degradation.

It localises to the cell membrane. In terms of biological role, might be involved in growth regulation, and in myelinization in the peripheral nervous system. The polypeptide is Peripheral myelin protein 22 (PMP22) (Equus caballus (Horse)).